The sequence spans 426 residues: Enolase (426 aa).

Position 163 (Gln163) interacts with (2R)-2-phosphoglycerate. The active-site Proton donor is Glu205. Mg(2+) contacts are provided by Asp242, Glu285, and Asp312. Residues Lys337, Arg366, Ser367, and Lys388 each coordinate (2R)-2-phosphoglycerate. Lys337 acts as the Proton acceptor in catalysis.

Belongs to the enolase family. It depends on Mg(2+) as a cofactor.

The protein localises to the cytoplasm. The protein resides in the secreted. Its subcellular location is the cell surface. It carries out the reaction (2R)-2-phosphoglycerate = phosphoenolpyruvate + H2O. It participates in carbohydrate degradation; glycolysis; pyruvate from D-glyceraldehyde 3-phosphate: step 4/5. Its function is as follows. Catalyzes the reversible conversion of 2-phosphoglycerate (2-PG) into phosphoenolpyruvate (PEP). It is essential for the degradation of carbohydrates via glycolysis. This Gluconobacter oxydans (strain 621H) (Gluconobacter suboxydans) protein is Enolase.